Reading from the N-terminus, the 1389-residue chain is MNRNIRRVRREVDSYIPSNNVNVETEGYLIRRIPKKCKPKVTSTIAQRVSQLENEVAEINVALAEHVNELNSQEKRIDKLEKTVKKKKSNCSDDSECSECSECSERSCCSKCNSNKCCCNNTCGVFPNSVEAFSYYGPISGNCGPFPGGNCGPFPGGPCGPFAGGNCGPFSGGSCGPFPGGPCGPIPGGNCGPIPGGPCGPISGGPCGPISGGSCGPALPYSAAVDGYEYFQNGPMMSCPPIGPMGPNGFVEEQFVGGNGPFIGGGGFIGPNNGFVEESWGNCNDCRRGKCKKHKNRRSKSDNSDLSEYSSSNSDDSECTDSDGSSCSTDGSPDCTESENTESHRSHGKKKHRFVNKKRNTCNNSDNKDNSRINMNICDLLKLFGDKCPIKIDPNEECKQVPNEFIQIKCCQEQICCQNSCCANKNSCCTDNCCPKTKCCEKDDTNSYTIEWQKSPDCCKEIDYCEKPFSCETNYCGNSYETDYCPIYIKPDSINSNNYTNSSEKYQYNHYDSDNCSDNYSDNYSDNDSEKVYNINLDATNINTDPNYNHNFNNNHNFNNNFTNNRMTDYSTDYISHNFNPGNNQYSQQISHEQNINQQQSQNSENLLDNNEYGDYENYYNMLRGDQNIFPVNNSSNFNQYESTDISNNQNFNSQIVDSIIDTNHNKDSIQVEFSNNNDKTHHEKNECHCHEHSQPCKTTSIVPFGTPIVDCNNCRNEECITIIQTDSSCSSNKVPIIQPIEPETKTMSIIDTAIANIDTCTDLTLINQPKGISTDAAILWAAKIGNLNMNQGMKVTTDSNNNIIVAGFYRADVTPEPSNDDVPPTVIYDSKGCGVKNITASGIEEIFIVKYDMYGNFLWFAKIESTFTDFTVSIAVDTEDNVIVTGSFTDSAVNIYDSTSQLVKHIPQPIPEPSAEITQSFIVKYSPAGIYQWTAVLFTSGIAVIKSVTTDPNNNIYITGYYGGQTLTFQNSDGTDSYSLGANSLTNVFVAAYNYLGFVLWVTMCGNIGNTVSEQGYNEGLDIKYSPDQTIVVSGYYNTNPLIIYDGPDGLTPSGISLTNVNNTNINITGNDINTTPDIFLIKFRLNGTALWATKISGTITQFNTSVWASEFSGISNQFYTTIAIDPDANIIITGTYNQGPVQIFNTPSGTILSTINLIITGTISTYIIKYGPRGNAIWATRISGALSQVSNGIATDSDSNIIVSGYFSAPVTVFYSSDGTTPFTLENVSEISAFTVKYDRCGNALWAVKQENNGITQALNVAVDNNDSVVIVGTFNQAPINFYNSNKQMAKCIINDSSYDGYVAKYADFVQSLVLLPGCKQKDIAINESCYKRANTLVTYKAGTISNSVSNCLRGFLMTRANSSIKLLPNGNNWLVDYSNNILFIYP.

The stretch at 43 to 94 forms a coiled coil; that stretch reads STIAQRVSQLENEVAEINVALAEHVNELNSQEKRIDKLEKTVKKKKSNCSDD. Positions 294 to 353 are disordered; it reads HKNRRSKSDNSDLSEYSSSNSDDSECTDSDGSSCSTDGSPDCTESENTESHRSHGKKKHR. Low complexity-rich tracts occupy residues 304 to 314 and 322 to 335; these read SDLSEYSSSNS and SDGS…SPDC. WD repeat units follow at residues 867–907, 1017–1056, and 1115–1156; these read TFTD…VKHI, GYNE…TPSG, and GISN…ILST.

It localises to the virion. This is an uncharacterized protein from Acanthamoeba polyphaga (Amoeba).